A 395-amino-acid chain; its full sequence is Zinc finger protein 385D (395 aa).

Matrin-type zinc fingers lie at residues 80-110 (ISCNICQLRFNSDSQAAAHYKGTKHAKKLKA), 204-234 (LYCSLCKVAVNSASQLEAHNSGTKHKTMLEA), and 267-297 (FHCEICDVHVNSETQLKQHISSRRHKDRASG). The disordered stretch occupies residues 282–308 (LKQHISSRRHKDRASGKPPKPKYSPYN).

It localises to the nucleus. The polypeptide is Zinc finger protein 385D (Znf385d) (Rattus norvegicus (Rat)).